Reading from the N-terminus, the 212-residue chain is UPF0319 protein PBPRA2789 (212 aa).

Residues 1 to 21 (MKKILLAFTLPLVLASQTAMA) form the signal peptide.

Belongs to the UPF0319 family.

The chain is UPF0319 protein PBPRA2789 from Photobacterium profundum (strain SS9).